A 495-amino-acid chain; its full sequence is UDP-glycosyltransferase 73C13 (495 aa).

Histidine 24 (proton acceptor) is an active-site residue. Histidine 24 contacts an anthocyanidin. The active-site Charge relay is aspartate 129. The UDP-alpha-D-glucose site is built by alanine 356, glutamine 358, histidine 373, tryptophan 376, asparagine 377, serine 378, and glutamate 381. Position 396 (alanine 396) interacts with an anthocyanidin. The UDP-alpha-D-glucose site is built by aspartate 397 and glutamine 398.

Belongs to the UDP-glycosyltransferase family.

The catalysed reaction is oleanolate + UDP-alpha-D-glucose = oleanolate 3-O-beta-D-glucoside + UDP + H(+). Functionally, catalyzes the transfer of a glucose (Glc) moiety from UDP-Glc to the C-3 position of the oleanane sapogenins oleanolate and hederagenin, and to the C-28 carboxylic group of the lupane sapogenin betulinate. The monoglucosylated hederagenin 3-O-beta-D-glucoside is a feeding deterrent of the yellow-striped flea beetle (Phyllotreta nemorum). This Barbarea vulgaris (Yellow rocket) protein is UDP-glycosyltransferase 73C13.